We begin with the raw amino-acid sequence, 763 residues long: Phosphoglycerol transferase I (763 aa).

The next 4 membrane-spanning stretches (helical) occupy residues 1–21 (MSEL…AWKA), 26–46 (WWFA…ITLF), 77–97 (ILPG…LGWI), and 108–128 (FGYS…SPAF).

It belongs to the OpgB family.

The protein resides in the cell inner membrane. It carries out the reaction a phosphatidylglycerol + a membrane-derived-oligosaccharide D-glucose = a 1,2-diacyl-sn-glycerol + a membrane-derived-oligosaccharide 6-(glycerophospho)-D-glucose.. It functions in the pathway glycan metabolism; osmoregulated periplasmic glucan (OPG) biosynthesis. Its function is as follows. Transfers a phosphoglycerol residue from phosphatidylglycerol to the membrane-bound nascent glucan backbones. The polypeptide is Phosphoglycerol transferase I (Escherichia coli O139:H28 (strain E24377A / ETEC)).